A 61-amino-acid chain; its full sequence is Metallothionein-1B (61 aa).

A beta region spans residues 1 to 29 (MDPNCSCVAGESCTCAGSCKCKQCRCASC). A divalent metal cation-binding residues include C5, C7, C13, C15, C19, C21, C24, C26, C29, C33, C34, C36, C37, C41, C44, C48, C50, C57, C59, and C60. The interval 30 to 61 (KKSCCSCCPVGCAKCAQGCVCKGASDKCSCCA) is alpha.

This sequence belongs to the metallothionein superfamily. Type 1 family.

In terms of biological role, metallothioneins have a high content of cysteine residues that bind various heavy metals; these proteins are transcriptionally regulated by both heavy metals and glucocorticoids. This chain is Metallothionein-1B, found in Equus caballus (Horse).